The chain runs to 170 residues: Putative pre-16S rRNA nuclease (170 aa).

Positions 1–18 are enriched in basic and acidic residues; that stretch reads MGTDDRLPDRPGADDPGR. Positions 1 to 22 are disordered; that stretch reads MGTDDRLPDRPGADDPGRGRRI.

This sequence belongs to the YqgF nuclease family.

The protein localises to the cytoplasm. Functionally, could be a nuclease involved in processing of the 5'-end of pre-16S rRNA. The protein is Putative pre-16S rRNA nuclease of Mycolicibacterium smegmatis (strain ATCC 700084 / mc(2)155) (Mycobacterium smegmatis).